The chain runs to 371 residues: Carnitine monooxygenase oxygenase subunit (371 aa).

The region spanning 44–152 (WICVAHSSEL…VEEYAGFLFI (109 aa)) is the Rieske domain. Cysteine 86, histidine 88, cysteine 106, and histidine 109 together coordinate [2Fe-2S] cluster. Fe cation is bound by residues histidine 208, histidine 213, and aspartate 323.

The protein belongs to the bacterial ring-hydroxylating dioxygenase alpha subunit family. CntA subfamily. In terms of assembly, composed of an oxygenase subunit (cntA) and a reductase subunit (cntB). Requires [2Fe-2S] cluster as cofactor. Fe cation is required as a cofactor.

The catalysed reaction is (R)-carnitine + NADH + O2 + H(+) = (3R)-3-hydroxy-4-oxobutanoate + trimethylamine + NAD(+) + H2O. It catalyses the reaction (R)-carnitine + NADPH + O2 + H(+) = (3R)-3-hydroxy-4-oxobutanoate + trimethylamine + NADP(+) + H2O. Its pathway is amine and polyamine metabolism; carnitine metabolism. Converts carnitine to trimethylamine and malic semialdehyde. The protein is Carnitine monooxygenase oxygenase subunit of Acinetobacter baumannii (strain ATCC 19606 / DSM 30007 / JCM 6841 / CCUG 19606 / CIP 70.34 / NBRC 109757 / NCIMB 12457 / NCTC 12156 / 81).